The chain runs to 436 residues: Protein PhoH2 (436 aa).

A PINc domain is found at 12-137; the sequence is RTYVLDTSVL…LVSKDLPMRL (126 aa).

The protein in the N-terminal section; belongs to the PINc/VapC protein family. This sequence in the C-terminal section; belongs to the PhoH family.

The catalysed reaction is n ATP + n H2O + wound RNA = n ADP + n phosphate + unwound RNA.. The enzyme catalyses ATP + H2O = ADP + phosphate + H(+). It carries out the reaction GTP + H2O = GDP + phosphate + H(+). Its function is as follows. Unwinds and/or cleaves 5'-tailed RNA in vitro, the reaction is maximal with hydrolyzable ATP; double-stranded (ds)RNA and dsDNA are not unwound. Unlike the protein in mycobacteria there does not seem to be an antitoxin gene upstream, suggesting this is not a toxin-antitoxin system. Has ATPase and GTPase activities. The chain is Protein PhoH2 from Thermobispora bispora (strain ATCC 19993 / DSM 43833 / CBS 139.67 / JCM 10125 / KCTC 9307 / NBRC 14880 / R51).